A 103-amino-acid chain; its full sequence is Large ribosomal subunit protein bL21 (103 aa).

This sequence belongs to the bacterial ribosomal protein bL21 family. In terms of assembly, part of the 50S ribosomal subunit. Contacts protein L20.

Its function is as follows. This protein binds to 23S rRNA in the presence of protein L20. In Psychrobacter sp. (strain PRwf-1), this protein is Large ribosomal subunit protein bL21.